A 342-amino-acid polypeptide reads, in one-letter code: Ferredoxin--NADP reductase (342 aa).

8 residues coordinate FAD: cysteine 17, aspartate 36, glutamine 44, tyrosine 49, isoleucine 89, phenylalanine 124, aspartate 289, and threonine 330.

This sequence belongs to the ferredoxin--NADP reductase type 2 family. In terms of assembly, homodimer. It depends on FAD as a cofactor.

The catalysed reaction is 2 reduced [2Fe-2S]-[ferredoxin] + NADP(+) + H(+) = 2 oxidized [2Fe-2S]-[ferredoxin] + NADPH. The protein is Ferredoxin--NADP reductase of Rhodopseudomonas palustris (strain BisB5).